Here is a 39-residue protein sequence, read N- to C-terminus: Photosystem II reaction center protein Psb30 (39 aa).

Residues 12-32 traverse the membrane as a helical segment; sequence IFQLTFVGLIVIAGPIVIAVL.

Belongs to the Psb30/Ycf12 family. In terms of assembly, PSII is composed of 1 copy each of membrane proteins PsbA, PsbB, PsbC, PsbD, PsbE, PsbF, PsbH, PsbI, PsbJ, PsbK, PsbL, PsbM, PsbT, PsbX, PsbY, PsbZ, Psb30/Ycf12, peripheral proteins PsbO, CyanoQ (PsbQ), PsbU, PsbV and a large number of cofactors. It forms dimeric complexes.

It localises to the cellular thylakoid membrane. A core subunit of photosystem II (PSII), probably helps stabilize the reaction center. This chain is Photosystem II reaction center protein Psb30, found in Crocosphaera subtropica (strain ATCC 51142 / BH68) (Cyanothece sp. (strain ATCC 51142)).